Here is a 295-residue protein sequence, read N- to C-terminus: Nitrogenase iron protein (295 aa).

Residue 10–17 (GKGGIGKS) coordinates ATP. Cys98 is a [4Fe-4S] cluster binding site. An ADP-ribosylarginine; by dinitrogenase reductase ADP-ribosyltransferase modification is found at Arg101. Cys133 serves as a coordination point for [4Fe-4S] cluster.

Belongs to the NifH/BchL/ChlL family. In terms of assembly, homodimer. [4Fe-4S] cluster serves as cofactor. Post-translationally, the reversible ADP-ribosylation of Arg-101 inactivates the nitrogenase reductase and regulates nitrogenase activity.

It carries out the reaction N2 + 8 reduced [2Fe-2S]-[ferredoxin] + 16 ATP + 16 H2O = H2 + 8 oxidized [2Fe-2S]-[ferredoxin] + 2 NH4(+) + 16 ADP + 16 phosphate + 6 H(+). Its function is as follows. The key enzymatic reactions in nitrogen fixation are catalyzed by the nitrogenase complex, which has 2 components: the iron protein and the molybdenum-iron protein. This chain is Nitrogenase iron protein, found in Tolumonas auensis (strain DSM 9187 / NBRC 110442 / TA 4).